The primary structure comprises 199 residues: Transgelin-2 (199 aa).

N-acetylalanine is present on Ala2. Ser11 carries the post-translational modification Phosphoserine. 2 positions are modified to N6-acetyllysine: Lys17 and Lys20. The Calponin-homology (CH) domain maps to 24–136 (ADLEQILIQW…RTLMNLGGLA (113 aa)). Ser163 carries the post-translational modification Phosphoserine. A Glycyl lysine isopeptide (Lys-Gly) (interchain with G-Cter in SUMO2) cross-link involves residue Lys171. The Calponin-like repeat unit spans residues 174-199 (IGLQMGTNRGASQAGMTGYGMPRQIL). A Phosphothreonine modification is found at Thr180. Omega-N-methylarginine is present on residues Arg182 and Arg196.

It belongs to the calponin family.

This chain is Transgelin-2 (TAGLN2), found in Bos taurus (Bovine).